A 673-amino-acid polypeptide reads, in one-letter code: Forkhead box protein O3 (673 aa).

The interval 1 to 153 (MAEAPASPAP…SGQPRKCSSR (153 aa)) is disordered. Ser-30 is modified (phosphoserine; by AMPK). Residue Thr-32 is modified to Phosphothreonine; by PKB/AKT1. An N6-methyllysine modification is found at Lys-46. The span at 57–68 (IPEEEDDEDDED) shows a compositional bias: acidic residues. Over residues 79–89 (IGGGGGSGTLG) the composition is skewed to gly residues. A required for mitochondrial import region spans residues 80 to 108 (GGGGGSGTLGSGLLLEDSARVLAPGGQDP). The residue at position 149 (Lys-149) is an N6-methyllysine. The segment at residues 157-251 (WGNLSYADLI…KSGKAPRRRA (95 aa)) is a DNA-binding region (fork-head). At Thr-179 the chain carries Phosphothreonine; by AMPK. Ser-209 carries the phosphoserine; by STK4/MST1 modification. Residue Ser-215 is modified to Phosphoserine; by MAPKAPK5. Lys-230 bears the N6-methyllysine mark. The interval 231–302 (SSWWIINPDG…GSPTSRSSDE (72 aa)) is disordered. At Lys-242 the chain carries N6-acetyllysine. The Nuclear localization signal motif lies at 242–259 (KSGKAPRRRAVSMDNSNK). A Phosphoserine; by PKB/AKT1 and MAPKAPK5 modification is found at Ser-253. Over residues 261 to 272 (TKSRGRAAKKKA) the composition is skewed to basic residues. N6-methyllysine occurs at positions 262 and 271. Ser-280 and Ser-284 each carry phosphoserine. The span at 283 to 298 (DSPSQLSKWPGSPTSR) shows a compositional bias: polar residues. Position 290 is an N6-methyllysine (Lys-290). A Phosphoserine modification is found at Ser-294. The residue at position 299 (Ser-299) is a Phosphoserine; by CaMK2A. The tract at residues 300–673 (SDELDAWTDF…QASSQSWVPG (374 aa)) is mediates interaction with CHUK/IKKA and IKBKB/IKKB. Ser-311 is subject to Phosphoserine. Phosphoserine; by SGK1 is present on Ser-315. Phosphoserine; by AMPK occurs at positions 399 and 413. Residue Lys-419 is modified to N6-methyllysine. Ser-421 carries the phosphoserine modification. The tract at residues 536 to 587 (HQHQTQGALGGSRALSNSVSNMGLSESSSLGSAKHQQQSPVSQSMQTLSDSL) is disordered. Residues 549 to 582 (ALSNSVSNMGLSESSSLGSAKHQQQSPVSQSMQT) are compositionally biased toward polar residues. Ser-551 carries the post-translational modification Phosphoserine; by MAPKAPK5. Ser-555 is modified (phosphoserine; by AMPK and MAPKAPK5). Phosphoserine; by AMPK is present on residues Ser-588 and Ser-626. The residue at position 644 (Ser-644) is a Phosphoserine; by IKKB.

In terms of assembly, upon metabolic stress, forms a complex composed of FOXO3, SIRT3 and mitochondrial RNA polymerase POLRMT; the complex is recruited to mtDNA in a SIRT3-dependent manner. Also forms a complex composed of FOXO3, SIRT3, TFAM and POLRMT. Interacts with SIRT2; the interaction occurs independently of SIRT2 deacetylase activity. Interacts with YWHAB/14-3-3-beta and YWHAZ/14-3-3-zeta, which are required for cytosolic sequestration. Upon oxidative stress, interacts with STK4/MST1, which disrupts interaction with YWHAB/14-3-3-beta and leads to nuclear translocation. Interacts with PIM1. Interacts with DDIT3/CHOP. Interacts (deacetylated form) with SKP2. Interacts with CHUK and IKBKB. Interacts with CAMK2A, CAMK2B and calcineurin A. Interacts with NUPR1; this interaction represses FOXO3 transactivation. In the presence of survival factors such as IGF1, phosphorylated on Thr-32 and Ser-253 by AKT1/PKB. This phosphorylated form then interacts with 14-3-3 proteins and is retained in the cytoplasm. Survival factor withdrawal induces dephosphorylation and promotes translocation to the nucleus where the dephosphorylated protein induces transcription of target genes and triggers apoptosis. Although AKT1/PKB doesn't appear to phosphorylate Ser-315 directly, it may activate other kinases that trigger phosphorylation at this residue. Phosphorylated by STK4/MST1 on Ser-209 upon oxidative stress, which leads to dissociation from YWHAB/14-3-3-beta and nuclear translocation. Phosphorylated by PIM1. Phosphorylation by AMPK leads to the activation of transcriptional activity without affecting subcellular localization. In response to metabolic stress, phosphorylated by AMPK on Ser-30 which mediates FOXO3 mitochondrial translocation. Phosphorylation by MAPKAPK5 promotes nuclear localization and DNA-binding, leading to induction of miR-34b and miR-34c expression, 2 post-transcriptional regulators of MYC that bind to the 3'UTR of MYC transcript and prevent its translation. Phosphorylated by CHUK/IKKA and IKBKB/IKKB. TNF-induced inactivation of FOXO3 requires its phosphorylation at Ser-644 by IKBKB/IKKB which promotes FOXO3 retention in the cytoplasm, polyubiquitination and ubiquitin-mediated proteasomal degradation. May be dephosphorylated by calcineurin A on Ser-299 which abolishes FOXO3 transcriptional activity. In cancer cells, ERK mediated-phosphorylation of Ser-12 is required for mitochondrial translocation of FOXO3 in response to metabolic stress or chemotherapeutic agents. Phosphorylation at Ser-253 promotes its degradation by the proteasome. Dephosphorylation at Ser-253 by protein phosphatase 2A (PPP2CA) promotes its stabilization; interaction with PPP2CA is enhanced by AMBRA1. In terms of processing, deacetylation by SIRT1 or SIRT2 stimulates interaction of FOXO3 with SKP2 and facilitates SCF(SKP2)-mediated FOXO3 ubiquitination and proteasomal degradation. Deacetylation by SIRT2 stimulates FOXO3-mediated transcriptional activity in response to oxidative stress. Deacetylated by SIRT3. Deacetylation by SIRT3 stimulates FOXO3-mediated mtDNA transcriptional activity in response to metabolic stress. Post-translationally, heavily methylated by SET9 which decreases stability, while moderately increasing transcriptional activity. The main methylation site is Lys-271. Methylation doesn't affect subcellular location. Polyubiquitinated. Ubiquitinated by a SCF complex containing SKP2, leading to proteasomal degradation. In terms of processing, the N-terminus is cleaved following import into the mitochondrion. As to expression, ubiquitous.

Its subcellular location is the cytoplasm. The protein resides in the cytosol. It localises to the nucleus. The protein localises to the mitochondrion matrix. It is found in the mitochondrion outer membrane. Functionally, transcriptional activator that recognizes and binds to the DNA sequence 5'-[AG]TAAA[TC]A-3' and regulates different processes, such as apoptosis and autophagy. Acts as a positive regulator of autophagy in skeletal muscle: in starved cells, enters the nucleus following dephosphorylation and binds the promoters of autophagy genes, such as GABARAP1L, MAP1LC3B and ATG12, thereby activating their expression, resulting in proteolysis of skeletal muscle proteins. Triggers apoptosis in the absence of survival factors, including neuronal cell death upon oxidative stress. Participates in post-transcriptional regulation of MYC: following phosphorylation by MAPKAPK5, promotes induction of miR-34b and miR-34c expression, 2 post-transcriptional regulators of MYC that bind to the 3'UTR of MYC transcript and prevent its translation. In response to metabolic stress, translocates into the mitochondria where it promotes mtDNA transcription. In response to metabolic stress, translocates into the mitochondria where it promotes mtDNA transcription. Also acts as a key regulator of chondrogenic commitment of skeletal progenitor cells in response to lipid availability: when lipids levels are low, translocates to the nucleus and promotes expression of SOX9, which induces chondrogenic commitment and suppresses fatty acid oxidation. Also acts as a key regulator of regulatory T-cells (Treg) differentiation by activating expression of FOXP3. The chain is Forkhead box protein O3 from Homo sapiens (Human).